Consider the following 183-residue polypeptide: NADH dehydrogenase [ubiquinone] iron-sulfur protein 4, mitochondrial (183 aa).

The transit peptide at 1–28 directs the protein to the mitochondrion; it reads MSALRQVMCRSTASLQLYQANRAAAARW. Residue Ser181 is modified to Phosphoserine.

The protein belongs to the complex I NDUFS4 subunit family.

It localises to the mitochondrion inner membrane. Functionally, accessory subunit of the mitochondrial membrane respiratory chain NADH dehydrogenase (Complex I), that is believed not to be involved in catalysis. Complex I functions in the transfer of electrons from NADH to the respiratory chain. The immediate electron acceptor for the enzyme is believed to be ubiquinone. This is NADH dehydrogenase [ubiquinone] iron-sulfur protein 4, mitochondrial from Drosophila melanogaster (Fruit fly).